Here is an 86-residue protein sequence, read N- to C-terminus: Large ribosomal subunit protein bL27 (86 aa).

The tract at residues 1 to 24 is disordered; it reads MAHKKGTGSTRNGRDSNSKRLGVK.

This sequence belongs to the bacterial ribosomal protein bL27 family.

The sequence is that of Large ribosomal subunit protein bL27 from Prochlorococcus marinus (strain AS9601).